The sequence spans 77 residues: MANISWSHFLILMLVFSVVKKGKGDQTDKYCTIIIDPRTPCDLVDCRLSCYTGYNGVGKCIASKASRTPNCVCTYNC.

Residues 1–24 form the signal peptide; the sequence is MANISWSHFLILMLVFSVVKKGKG. 4 disulfide bridges follow: C31–C77, C41–C60, C46–C71, and C50–C73.

Belongs to the DEFL family.

The protein localises to the secreted. The sequence is that of Putative defensin-like protein 158 (LCR23) from Arabidopsis thaliana (Mouse-ear cress).